Here is a 633-residue protein sequence, read N- to C-terminus: Probable extracellular metalloproteinase 5 (633 aa).

A signal peptide spans 1–20 (MHGLLLAAAGLLSLPLHVLA). Positions 21–244 (HPQPSTNLAG…VHNVVDYVSH (224 aa)) are excised as a propeptide. Residue Asn-285 is glycosylated (N-linked (GlcNAc...) asparagine). A Zn(2+)-binding site is contributed by His-428. The active site involves Glu-429. His-432 provides a ligand contact to Zn(2+). N-linked (GlcNAc...) asparagine glycans are attached at residues Asn-592 and Asn-621.

Belongs to the peptidase M36 family. It depends on Zn(2+) as a cofactor.

The protein localises to the secreted. In terms of biological role, secreted metalloproteinase probably acting as a virulence factor. The sequence is that of Probable extracellular metalloproteinase 5 (MEP5) from Arthroderma benhamiae (strain ATCC MYA-4681 / CBS 112371) (Trichophyton mentagrophytes).